The primary structure comprises 137 residues: MPEYEGNCLCKAIHLKAIIEEPKLSCCHCETCRIWCSSPFMAFSCTQKPSVSENENVGKYASSSFAERIFCKNCGTTLYFAYTNGKNPYFINAWLFKGIENITFDAQVCIDDKPDCYDFANKTSMFTVDEVMKSIVK.

The region spanning 4 to 118 (YEGNCLCKAI…CIDDKPDCYD (115 aa)) is the CENP-V/GFA domain. Zn(2+) is bound by residues Cys-8, Cys-10, Cys-27, Cys-29, Cys-32, Cys-71, and Cys-74.

This sequence belongs to the Gfa family. Zn(2+) is required as a cofactor.

Its subcellular location is the cytoplasm. The protein resides in the nucleus. This is an uncharacterized protein from Schizosaccharomyces pombe (strain 972 / ATCC 24843) (Fission yeast).